The primary structure comprises 141 residues: HTH-type transcriptional regulator LrpA (141 aa).

The HTH asnC-type domain occupies 2–63; that stretch reads VDERDKIILD…KINPKKLGYS (62 aa). The H-T-H motif DNA-binding region spans 21–40; sequence FTEIAKILGISETAVRKRVK.

In terms of assembly, homooctamer; tetramer of dimers.

In terms of biological role, DNA-binding protein that negatively regulates its own transcription. Interferes with RNA polymerase (RNAP) recruitment by inhibiting the association of RNAP with the TBP-TFB promoter complex. This chain is HTH-type transcriptional regulator LrpA (lrpA), found in Pyrococcus abyssi (strain GE5 / Orsay).